A 66-amino-acid polypeptide reads, in one-letter code: Sodium channel neurotoxin MeuNaTxalpha-7 (66 aa).

In terms of domain architecture, LCN-type CS-alpha/beta spans 2-64 (RDGYIADDKN…VPIKVSGKCN (63 aa)). Cystine bridges form between Cys12–Cys63, Cys16–Cys36, Cys22–Cys46, and Cys26–Cys48. Asn64 carries the asparagine amide modification.

This sequence belongs to the long (4 C-C) scorpion toxin superfamily. Sodium channel inhibitor family. Alpha subfamily. In terms of tissue distribution, expressed by the venom gland.

The protein localises to the secreted. In terms of biological role, alpha toxins bind voltage-independently at site-3 of sodium channels (Nav) and inhibit the inactivation of the activated channels, thereby blocking neuronal transmission. This is Sodium channel neurotoxin MeuNaTxalpha-7 from Mesobuthus eupeus (Lesser Asian scorpion).